Consider the following 298-residue polypeptide: ATP synthase gamma chain (298 aa).

The protein belongs to the ATPase gamma chain family. As to quaternary structure, F-type ATPases have 2 components, CF(1) - the catalytic core - and CF(0) - the membrane proton channel. CF(1) has five subunits: alpha(3), beta(3), gamma(1), delta(1), epsilon(1). CF(0) has three main subunits: a, b and c.

It localises to the cell inner membrane. Functionally, produces ATP from ADP in the presence of a proton gradient across the membrane. The gamma chain is believed to be important in regulating ATPase activity and the flow of protons through the CF(0) complex. The sequence is that of ATP synthase gamma chain from Albidiferax ferrireducens (strain ATCC BAA-621 / DSM 15236 / T118) (Rhodoferax ferrireducens).